Reading from the N-terminus, the 469-residue chain is ATP synthase subunit beta (469 aa).

Gly-156–Thr-163 contributes to the ATP binding site.

Belongs to the ATPase alpha/beta chains family. As to quaternary structure, F-type ATPases have 2 components, CF(1) - the catalytic core - and CF(0) - the membrane proton channel. CF(1) has five subunits: alpha(3), beta(3), gamma(1), delta(1), epsilon(1). CF(0) has three main subunits: a(1), b(2) and c(9-12). The alpha and beta chains form an alternating ring which encloses part of the gamma chain. CF(1) is attached to CF(0) by a central stalk formed by the gamma and epsilon chains, while a peripheral stalk is formed by the delta and b chains.

The protein resides in the cell membrane. It catalyses the reaction ATP + H2O + 4 H(+)(in) = ADP + phosphate + 5 H(+)(out). Produces ATP from ADP in the presence of a proton gradient across the membrane. The catalytic sites are hosted primarily by the beta subunits. This chain is ATP synthase subunit beta, found in Lactococcus lactis subsp. cremoris (strain SK11).